The sequence spans 434 residues: tRNA modification GTPase MnmE (434 aa).

The (6S)-5-formyl-5,6,7,8-tetrahydrofolate site is built by Arg-20, Glu-79, and Val-119. In terms of domain architecture, TrmE-type G spans 219–361 (GLRVVLAGRP…LQEKLVEIGK (143 aa)). Residues 229–234 (NAGKST), 248–254 (APIAGTT), and 273–276 (DTAG) each bind GTP. Residues Ser-233 and Thr-254 each contribute to the Mg(2+) site. A (6S)-5-formyl-5,6,7,8-tetrahydrofolate-binding site is contributed by Lys-434.

This sequence belongs to the TRAFAC class TrmE-Era-EngA-EngB-Septin-like GTPase superfamily. TrmE GTPase family. As to quaternary structure, homodimer. Heterotetramer of two MnmE and two MnmG subunits. Requires K(+) as cofactor.

It is found in the cytoplasm. Functionally, exhibits a very high intrinsic GTPase hydrolysis rate. Involved in the addition of a carboxymethylaminomethyl (cmnm) group at the wobble position (U34) of certain tRNAs, forming tRNA-cmnm(5)s(2)U34. This Zymomonas mobilis subsp. mobilis (strain ATCC 31821 / ZM4 / CP4) protein is tRNA modification GTPase MnmE.